Here is a 556-residue protein sequence, read N- to C-terminus: 2,3-bisphosphoglycerate-independent phosphoglycerate mutase (556 aa).

Mn(2+) contacts are provided by aspartate 25 and serine 78. Serine 78 serves as the catalytic Phosphoserine intermediate. Residues histidine 137, 167-168 (RD), arginine 203, arginine 210, 283-286 (RADR), and lysine 358 each bind substrate. Mn(2+) contacts are provided by aspartate 427, histidine 431, aspartate 468, histidine 469, and histidine 498.

Belongs to the BPG-independent phosphoglycerate mutase family. Monomer. It depends on Mn(2+) as a cofactor. As to expression, found ubiquitously in germinating seed.

The protein resides in the cytoplasm. It catalyses the reaction (2R)-2-phosphoglycerate = (2R)-3-phosphoglycerate. Its pathway is carbohydrate degradation; glycolysis; pyruvate from D-glyceraldehyde 3-phosphate: step 3/5. Catalyzes the interconversion of 2-phosphoglycerate and 3-phosphoglycerate. The polypeptide is 2,3-bisphosphoglycerate-independent phosphoglycerate mutase (Ricinus communis (Castor bean)).